We begin with the raw amino-acid sequence, 377 residues long: Chaperone protein DnaJ (377 aa).

Residues 5–70 (DYYEILGVSR…QKRAAYDQYG (66 aa)) enclose the J domain. The CR-type zinc-finger motif lies at 132-210 (GVTKEIRIPT…CHGHGRIEKS (79 aa)). Zn(2+) is bound by residues Cys-145, Cys-148, Cys-162, Cys-165, Cys-184, Cys-187, Cys-198, and Cys-201. 4 CXXCXGXG motif repeats span residues 145–152 (CDVCHGSG), 162–169 (CPTCHGAG), 184–191 (CPHCHGRG), and 198–205 (CNKCHGHG).

The protein belongs to the DnaJ family. As to quaternary structure, homodimer. Zn(2+) serves as cofactor.

The protein resides in the cytoplasm. Its function is as follows. Participates actively in the response to hyperosmotic and heat shock by preventing the aggregation of stress-denatured proteins and by disaggregating proteins, also in an autonomous, DnaK-independent fashion. Unfolded proteins bind initially to DnaJ; upon interaction with the DnaJ-bound protein, DnaK hydrolyzes its bound ATP, resulting in the formation of a stable complex. GrpE releases ADP from DnaK; ATP binding to DnaK triggers the release of the substrate protein, thus completing the reaction cycle. Several rounds of ATP-dependent interactions between DnaJ, DnaK and GrpE are required for fully efficient folding. Also involved, together with DnaK and GrpE, in the DNA replication of plasmids through activation of initiation proteins. In Edwardsiella ictaluri (strain 93-146), this protein is Chaperone protein DnaJ.